Consider the following 256-residue polypeptide: L-rhamnose 1-dehydrogenase (NAD(P)(+)) (256 aa).

8 residues coordinate NADP(+): G12, S14, R15, I17, S37, D66, A67, and N93. Residue S146 is the Proton donor of the active site. S146, S148, Q156, and Y159 together coordinate beta-L-rhamnose. 2 residues coordinate NADP(+): Y159 and K163. The Proton acceptor role is filled by Y159. Catalysis depends on K163, which acts as the Lowers pKa of active site Tyr. T191 contacts beta-L-rhamnose. I192 is a binding site for NADP(+). N197 is a beta-L-rhamnose binding site.

This sequence belongs to the short-chain dehydrogenases/reductases (SDR) family.

It carries out the reaction L-rhamnofuranose + NAD(+) = L-rhamnono-1,4-lactone + NADH + H(+). The catalysed reaction is L-rhamnofuranose + NADP(+) = L-rhamnono-1,4-lactone + NADPH + H(+). It participates in carbohydrate degradation; L-rhamnose degradation. Functionally, NAD(P)-dependent dehydrogenase that catalyzes the oxidation of L-rhamnose to L-rhamnono-1,4-lactone. Also shows high activity with L-lyxose and low activity with L-mannose and L-fucose. Can utilize either NAD(+) or NADP(+), with a strong preference for NADP(+). Catalyzes the first step in an alternative pathway for rhamnose utilization that does not involve phosphorylated intermediates. In Azotobacter vinelandii (strain DJ / ATCC BAA-1303), this protein is L-rhamnose 1-dehydrogenase (NAD(P)(+)).